We begin with the raw amino-acid sequence, 161 residues long: ATP synthase subunit b' (161 aa).

Residues 26–45 traverse the membrane as a helical segment; sequence LPLMAIQFLLLAFVLDKIFY.

The protein belongs to the ATPase B chain family. As to quaternary structure, F-type ATPases have 2 components, F(1) - the catalytic core - and F(0) - the membrane proton channel. F(1) has five subunits: alpha(3), beta(3), gamma(1), delta(1), epsilon(1). F(0) has four main subunits: a(1), b(1), b'(1) and c(10-14). The alpha and beta chains form an alternating ring which encloses part of the gamma chain. F(1) is attached to F(0) by a central stalk formed by the gamma and epsilon chains, while a peripheral stalk is formed by the delta, b and b' chains.

The protein localises to the cellular thylakoid membrane. Functionally, f(1)F(0) ATP synthase produces ATP from ADP in the presence of a proton or sodium gradient. F-type ATPases consist of two structural domains, F(1) containing the extramembraneous catalytic core and F(0) containing the membrane proton channel, linked together by a central stalk and a peripheral stalk. During catalysis, ATP synthesis in the catalytic domain of F(1) is coupled via a rotary mechanism of the central stalk subunits to proton translocation. Its function is as follows. Component of the F(0) channel, it forms part of the peripheral stalk, linking F(1) to F(0). The b'-subunit is a diverged and duplicated form of b found in plants and photosynthetic bacteria. In Trichodesmium erythraeum (strain IMS101), this protein is ATP synthase subunit b'.